The primary structure comprises 872 residues: Alanine--tRNA ligase (872 aa).

Histidine 567, histidine 571, cysteine 669, and histidine 673 together coordinate Zn(2+).

It belongs to the class-II aminoacyl-tRNA synthetase family. The cofactor is Zn(2+).

The protein resides in the cytoplasm. It catalyses the reaction tRNA(Ala) + L-alanine + ATP = L-alanyl-tRNA(Ala) + AMP + diphosphate. In terms of biological role, catalyzes the attachment of alanine to tRNA(Ala) in a two-step reaction: alanine is first activated by ATP to form Ala-AMP and then transferred to the acceptor end of tRNA(Ala). Also edits incorrectly charged Ser-tRNA(Ala) and Gly-tRNA(Ala) via its editing domain. In Streptococcus mutans serotype c (strain ATCC 700610 / UA159), this protein is Alanine--tRNA ligase.